We begin with the raw amino-acid sequence, 95 residues long: Fungal defensin plectasin (95 aa).

The signal sequence occupies residues 1–23 (MQFTTILSIGITVFGLLNTGAFA). A propeptide spanning residues 24–55 (APQPVPEAYAVSDPEAHPDDFAGMDANQLQKR) is cleaved from the precursor. Positions 57, 58, and 59 each coordinate beta-D-GlcNAc-(1-&gt;4)-Mur2Ac(oyl-L-Ala-gamma-D-Glu-L-Lys-D-Ala-D-Ala)-di-trans,octa-cis-undecaprenyl diphosphate. 3 disulfide bridges follow: Cys-59/Cys-85, Cys-70/Cys-92, and Cys-74/Cys-94. A binds to membrane interface region spans residues 61 to 64 (GPWD). Residues Asp-67, His-73, Tyr-84, Ala-86, Gly-88, Cys-92, and Lys-93 each contribute to the beta-D-GlcNAc-(1-&gt;4)-Mur2Ac(oyl-L-Ala-gamma-D-Glu-L-Lys-D-Ala-D-Ala)-di-trans,octa-cis-undecaprenyl diphosphate site. The segment at 86–92 (AKGGFVC) is binds to membrane interface.

It belongs to the invertebrate defensin family. Type 2 subfamily.

The protein resides in the secreted. It is found in the host cell membrane. Antimicrobial peptide that potently acts against several species of Gram-positive bacteria. It selectively inhibits peptidoglycan biosynthesis through complex formation with the cell wall precursor lipid II (1:1 molar ratio) thus inhibiting cell wall synthesis. It does not disrupt cell membranes. Is especially active against numerous clinical isolates of S.pneumoniae, including all 90 different serotypes and isolates resistant to clinically used antibiotics. In vitro, shows considerable selectivity for bacteria over mammalian cells. The peptide synthesized in D-amino acids does not show antibacterial activity. In vitro, acts on voltage-gated potassium channels by moderately inhibiting mammalian Kv1.3/KCNA3 (IC(50)=2.8 uM), and moderately inhibiting others potassium channels. The chain is Fungal defensin plectasin (DEF) from Pseudoplectania nigrella (Ebony cup).